Consider the following 374-residue polypeptide: Alpha-N-acetylgalactosaminide alpha-2,6-sialyltransferase 2 (374 aa).

Over 1 to 7 (MGLPRGS) the chain is Cytoplasmic. A helical; Signal-anchor for type II membrane protein transmembrane segment spans residues 8 to 28 (FFWLLLLLTAACSGLLFALYF). At 29 to 374 (SAVQRYPGPA…KAGILQLYQR (346 aa)) the chain is on the lumenal side. Disulfide bonds link C66–C148 and C151–C317. N-linked (GlcNAc...) asparagine glycans are attached at residues N85 and N130. CMP-N-acetyl-beta-neuraminate is bound at residue N156. N161 carries an N-linked (GlcNAc...) asparagine glycan. Residues N179, S304, and H336 each contribute to the CMP-N-acetyl-beta-neuraminate site.

Belongs to the glycosyltransferase 29 family. As to expression, expressed in skeletal muscle, heart, kidney, placenta, lung and leukocytes.

It localises to the golgi apparatus membrane. It carries out the reaction a beta-D-galactosyl-(1-&gt;3)-N-acetyl-alpha-D-galactosaminyl derivative + CMP-N-acetyl-beta-neuraminate = a beta-D-galactosyl-(1-&gt;3)-[N-acetyl-alpha-neuraminyl-(2-&gt;6)]-N-acetyl-alpha-D-galactosaminyl derivative + CMP + H(+). The enzyme catalyses a 3-O-[N-acetyl-alpha-D-galactosaminyl]-L-threonyl-[protein] + CMP-N-acetyl-beta-neuraminate = a 3-O-[N-acetyl-alpha-neuraminosyl-(2-&gt;6)-N-acetyl-alpha-D-galactosaminyl]-L-threonyl-[protein] + CMP + H(+). It catalyses the reaction a 3-O-[N-acetyl-alpha-neuraminyl-(2-&gt;3)-beta-D-galactosyl-(1-&gt;3)-N-acetyl-alpha-D-galactosaminyl]-L-threonyl-[protein] + CMP-N-acetyl-beta-neuraminate = a 3-O-{alpha-Neu5Ac-(2-&gt;3)-beta-D-Gal-(1-&gt;3)-[alpha-Neu5Ac-(2-&gt;6)]-alpha-D-GalNAc}-L-threonyl-[protein] + CMP + H(+). Its pathway is protein modification; protein glycosylation. Catalyzes the transfer of N-acetylneuraminyl groups onto glycan chains in glycoproteins. Conjugates sialic acid with an alpha-2-6 linkage to N-acetylgalactosamine (GalNAc) glycan chains linked to serine or threonine in glycoproteins. Sialylates alphaGalNAc- and Galbeta1-&gt;3GalNAc-O-Ser/Thr epitopes also known as Tn and T antigens. The chain is Alpha-N-acetylgalactosaminide alpha-2,6-sialyltransferase 2 (ST6GALNAC2) from Homo sapiens (Human).